The chain runs to 718 residues: Protein Hook homolog 3 (718 aa).

Met1 carries the post-translational modification N-acetylmethionine. Positions Met1 to Val164 are sufficient for interaction with microtubules. 2 positions are modified to phosphoserine: Ser3 and Ser6. Residues Ala10–Ala126 enclose the Calponin-homology (CH) domain. 2 coiled-coil regions span residues Gly167–Gln433 and Glu462–Ser667. Ser238 carries the post-translational modification Phosphoserine. The interval Glu553–Arg718 is required for association with Golgi. The tract at residues His556–Arg718 is required for interaction with MSR1. The tract at residues Glu682 to Arg718 is disordered. Ser693 and Ser707 each carry phosphoserine. Low complexity predominate over residues Ala696–Ser707.

This sequence belongs to the hook family. As to quaternary structure, self-associates. Component of the FTS/Hook/FHIP complex (FHF complex), composed of AKTIP/FTS, FHIP1B, and one or more members of the Hook family of proteins HOOK1, HOOK2, and HOOK3. May interact directly with AKTIP/FTS, HOOK1 and HOOK2. Associates with several subunits of the homotypic vesicular sorting complex (the HOPS complex) including VPS16 and VPS41; these interactions may be indirect. Interacts with MSR1, and this association is stimulated by ligand binding to MSR1. Interacts with microtubules. Part of a tripartite complex with dynein and dynactin, acts an adapter linking the dynein motor complex and dynactin. Interacts with dynein intermediate chain and dynactin (DCTN1). Interacts with CCDC181. Interacts with LRGUK. (Microbial infection) Interacts with Salmonella typhimurium spiC.

Its subcellular location is the cytoplasm. The protein resides in the cytoskeleton. It is found in the golgi apparatus. Acts as an adapter protein linking the dynein motor complex to various cargos and converts dynein from a non-processive to a highly processive motor in the presence of dynactin. Facilitates the interaction between dynein and dynactin and activates dynein processivity (the ability to move along a microtubule for a long distance without falling off the track). Predominantly recruits 2 dyneins, which increases both the force and speed of the microtubule motor. Component of the FTS/Hook/FHIP complex (FHF complex). The FHF complex may function to promote vesicle trafficking and/or fusion via the homotypic vesicular protein sorting complex (the HOPS complex). May regulate clearance of endocytosed receptors such as MSR1. Participates in defining the architecture and localization of the Golgi complex. FHF complex promotes the distribution of AP-4 complex to the perinuclear area of the cell. In terms of biological role, (Microbial infection) May serve as a target for the spiC protein from Salmonella typhimurium, which inactivates it, leading to a strong alteration in cellular trafficking. This chain is Protein Hook homolog 3, found in Homo sapiens (Human).